We begin with the raw amino-acid sequence, 465 residues long: WAS protein family homolog 2 (465 aa).

Residues Met1–Gln54 form a required for WASH complex assembly region. The WHD1 stretch occupies residues Met1–Ile167. Residue Lys220 forms a Glycyl lysine isopeptide (Lys-Gly) (interchain with G-Cter in ubiquitin) linkage. 2 disordered regions span residues Gln297–His407 and Gly422–Ser465. Positions Thr302–Pro314 are enriched in pro residues. The VCA stretch occupies residues Gln349–Ser465. The region spanning Gly361 to Met383 is the WH2 domain. The segment covering Ser382–Gln398 has biased composition (basic and acidic residues). The span at Ser424–Gly436 shows a compositional bias: gly residues. A compositionally biased stretch (acidic residues) spans Ala456 to Ser465.

This sequence belongs to the WASH1 family. Component of the WASH core complex also described as WASH regulatory complex (SHRC) composed of WASH (WASHC1, WASH2P or WASH3P), WASHC2 (WASHC2A or WASHC2C), WASHC3, WASHC4 and WASHC5. The WASH core complex associates with the F-actin-capping protein dimer (formed by CAPZA1, CAPZA2 or CAPZA3 and CAPZB) in a transient or substoichiometric manner which was initially described as WASH complex. Interacts (via WHD1 region) with WASHC2C; the interaction is direct. Interacts with alpha-tubulin. Interacts with BECN1; WASHC1 and AMBRA1 can competitively interact with BECN1. Interacts with BLOC1S2; may associate with the BLOC-1 complex. Interacts with tubulin gamma chain (TUBG1 or TUBG2). Interacts with EXOC1, EXOC4, EXOC8; in MMP14-positive endosomes in breast tumor cells; indicative for an association with the exocyst complex.

The protein resides in the early endosome membrane. The protein localises to the recycling endosome membrane. Its subcellular location is the late endosome. It localises to the cytoplasmic vesicle. It is found in the autophagosome. The protein resides in the cytoplasm. The protein localises to the cytoskeleton. Its subcellular location is the microtubule organizing center. It localises to the centrosome. It is found in the centriole. In terms of biological role, acts as a nucleation-promoting factor at the surface of endosomes, where it recruits and activates the Arp2/3 complex to induce actin polymerization, playing a key role in the fission of tubules that serve as transport intermediates during endosome sorting. Involved in endocytic trafficking of EGF. Involved in transferrin receptor recycling. Regulates the trafficking of endosomal alpha5beta1 integrin to the plasma membrane and involved in invasive cell migration. In T-cells involved in endosome-to-membrane recycling of receptors including T-cell receptor (TCR), CD28 and ITGAL; proposed to be implicated in T-cell proliferation and effector function. In dendritic cells involved in endosome-to-membrane recycling of major histocompatibility complex (MHC) class II probably involving retromer and subsequently allowing antigen sampling, loading and presentation during T-cell activation. Involved in Arp2/3 complex-dependent actin assembly driving Salmonella typhimurium invasion independent of ruffling. Involved in the exocytosis of MMP14 leading to matrix remodeling during invasive migration and implicating late endosome-to-plasma membrane tubular connections and cooperation with the exocyst complex. Involved in negative regulation of autophagy independently from its role in endosomal sorting by inhibiting BECN1 ubiquitination to inactivate PIK3C3/Vps34 activity. In Homo sapiens (Human), this protein is WAS protein family homolog 2 (WASH2P).